The primary structure comprises 321 residues: Large ribosomal RNA subunit accumulation protein YCED homolog 1, chloroplastic (321 aa).

A chloroplast-targeting transit peptide spans 1 to 32 (MSLVCSLSCVAPLPQTKQSRPSFLKLETCTLS).

Belongs to the DUF177 domain family.

It localises to the plastid. The protein localises to the chloroplast stroma. It is found in the chloroplast nucleoid. In terms of biological role, plays a role in synthesis, processing and/or stability of 23S rRNA. Required for embryogenesis. This Arabidopsis thaliana (Mouse-ear cress) protein is Large ribosomal RNA subunit accumulation protein YCED homolog 1, chloroplastic.